A 223-amino-acid chain; its full sequence is Adenylate kinase 4, mitochondrial (223 aa).

15–20 (GSGKGT) is a binding site for a ribonucleoside 5'-triphosphate. Residues 35 to 64 (SSGHFLRENIKANTEVGEMAKQYIEKSLLV) form an NMP region. Residues serine 36 and arginine 41 each coordinate AMP. At lysine 60 the chain carries N6-succinyllysine. Residues 62-64 (LLV), 89-92 (GFPR), and glutamine 96 each bind AMP. The interval 125-162 (RRWIHPPSGRVYNLDFNPPHVHGIDDVTGEPLVQQEDD) is LID. Residues arginine 126 and 135-136 (VY) contribute to the a ribonucleoside 5'-triphosphate site. Position 170 (arginine 170) interacts with AMP. Lysine 175 is subject to N6-acetyllysine. An N6-acetyllysine; alternate mark is found at lysine 179 and lysine 186. Lysine 179 and lysine 186 each carry N6-succinyllysine; alternate. Threonine 199 lines the a ribonucleoside 5'-triphosphate pocket.

This sequence belongs to the adenylate kinase family. AK3 subfamily. In terms of assembly, monomer. Interacts with SLC25A5/ANT2.

It localises to the mitochondrion matrix. It catalyses the reaction a ribonucleoside 5'-phosphate + ATP = a ribonucleoside 5'-diphosphate + ADP. The catalysed reaction is AMP + ATP = 2 ADP. It carries out the reaction GTP + AMP = GDP + ADP. The enzyme catalyses CMP + ATP = CDP + ADP. It catalyses the reaction GTP + CMP = CDP + GDP. The catalysed reaction is dAMP + ATP = dADP + ADP. It carries out the reaction dCMP + ATP = dCDP + ADP. The enzyme catalyses a 2'-deoxyribonucleoside 5'-diphosphate + ATP = a 2'-deoxyribonucleoside 5'-triphosphate + ADP. It catalyses the reaction a ribonucleoside 5'-diphosphate + ATP = a ribonucleoside 5'-triphosphate + ADP. The catalysed reaction is GDP + ATP = GTP + ADP. It carries out the reaction CDP + GTP = CTP + GDP. The enzyme catalyses CDP + ATP = CTP + ADP. It catalyses the reaction UDP + ATP = UTP + ADP. The catalysed reaction is GTP + UDP = UTP + GDP. It carries out the reaction dADP + GTP = dATP + GDP. The enzyme catalyses dCDP + GTP = dCTP + GDP. It catalyses the reaction dCDP + ATP = dCTP + ADP. The catalysed reaction is dGDP + ATP = dGTP + ADP. It carries out the reaction dTDP + GTP = dTTP + GDP. The enzyme catalyses dTDP + ATP = dTTP + ADP. In terms of biological role, broad-specificity mitochondrial nucleoside phosphate kinase involved in cellular nucleotide homeostasis by catalyzing nucleoside-phosphate interconversions. Similar to other adenylate kinases, preferentially catalyzes the phosphorylation of the nucleoside monophosphate AMP with ATP as phosphate donor to produce ADP. Phosphorylates only AMP when using GTP as phosphate donor. In vitro, can also catalyze the phosphorylation of CMP, dAMP and dCMP and use GTP as an alternate phosphate donor. Moreover, exhibits a diphosphate kinase activity, producing ATP, CTP, GTP, UTP, TTP, dATP, dCTP and dGTP from the corresponding diphosphate substrates with either ATP or GTP as phosphate donors. Plays a role in controlling cellular ATP levels by regulating phosphorylation and activation of the energy sensor protein kinase AMPK. Plays a protective role in the cellular response to oxidative stress. The polypeptide is Adenylate kinase 4, mitochondrial (Pongo abelii (Sumatran orangutan)).